The following is a 544-amino-acid chain: Chaperonin GroEL (544 aa).

ATP contacts are provided by residues 30-33 (TLGP), K51, 87-91 (DGTTT), G415, 479-481 (NAA), and D495.

This sequence belongs to the chaperonin (HSP60) family. As to quaternary structure, forms a cylinder of 14 subunits composed of two heptameric rings stacked back-to-back. Interacts with the co-chaperonin GroES.

The protein resides in the cytoplasm. It carries out the reaction ATP + H2O + a folded polypeptide = ADP + phosphate + an unfolded polypeptide.. Functionally, together with its co-chaperonin GroES, plays an essential role in assisting protein folding. The GroEL-GroES system forms a nano-cage that allows encapsulation of the non-native substrate proteins and provides a physical environment optimized to promote and accelerate protein folding. The polypeptide is Chaperonin GroEL (Francisella tularensis subsp. tularensis (strain WY96-3418)).